We begin with the raw amino-acid sequence, 293 residues long: Mating-type protein A-1 (293 aa).

A DNA-binding region (alpha box) is located at residues 42-97 (AAKKKVNGFMGFRSYYSPLFSQLPQKERSPFMTILWQHDPFHNEWDFMCSVYSSIR).

This sequence belongs to the MATALPHA1 family.

It localises to the nucleus. Mating type proteins are sequence specific DNA-binding proteins that act as master switches in yeast differentiation by controlling gene expression in a cell type-specific fashion. Transcriptional activator that induces the transcription of A-specific genes like mating factor ccg-4. Required for mating as an A-cell and for blocking of heterokaryon formation (vegetative incompatibility). The chain is Mating-type protein A-1 (mtA-1) from Neurospora crassa (strain ATCC 24698 / 74-OR23-1A / CBS 708.71 / DSM 1257 / FGSC 987).